Here is a 2278-residue protein sequence, read N- to C-terminus: Protein Ycf2 (2278 aa).

1632–1639 (GSIGTGRS) is a binding site for ATP.

The protein belongs to the Ycf2 family.

It is found in the plastid. The protein localises to the chloroplast stroma. Its function is as follows. Probable ATPase of unknown function. Its presence in a non-photosynthetic plant (Epifagus virginiana) and experiments in tobacco indicate that it has an essential function which is probably not related to photosynthesis. The protein is Protein Ycf2 of Solanum bulbocastanum (Wild potato).